Reading from the N-terminus, the 573-residue chain is 60 kDa heat shock protein, mitochondrial (573 aa).

The N-terminal 26 residues, methionine 1–tyrosine 26, are a transit peptide targeting the mitochondrion. Lysine 31 bears the N6-succinyllysine mark. Residues serine 67 and serine 70 each carry the phosphoserine modification. Residue lysine 75 participates in ATP binding. Lysine 75 bears the N6-acetyllysine mark. Lysine 82 carries the N6-acetyllysine; alternate modification. N6-succinyllysine; alternate is present on lysine 82. At lysine 87 the chain carries N6-acetyllysine. Residue tyrosine 90 is modified to Phosphotyrosine. The residue at position 91 (lysine 91) is an N6-acetyllysine. Residue aspartate 111–threonine 115 coordinates ATP. Position 125 is an N6-acetyllysine; alternate (lysine 125). At lysine 125 the chain carries N6-succinyllysine; alternate. An N6-acetyllysine modification is found at lysine 130. Lysine 133 is subject to N6-acetyllysine; alternate. Lysine 133 carries the N6-succinyllysine; alternate modification. Residue lysine 133 is modified to N6-malonyllysine; alternate. Lysine 156 carries the N6-acetyllysine modification. 5 positions are modified to N6-acetyllysine; alternate: lysine 191, lysine 202, lysine 205, lysine 218, and lysine 236. An N6-succinyllysine; alternate mark is found at lysine 191, lysine 202, lysine 205, lysine 218, and lysine 236. The residue at position 249 (lysine 249) is an N6-acetyllysine. Residue lysine 250 is modified to N6-acetyllysine; alternate. Lysine 250 is subject to N6-succinyllysine; alternate. N6-acetyllysine occurs at positions 269 and 292. Lysine 301 carries the N6-succinyllysine modification. Residue lysine 314 is modified to N6-acetyllysine. Lysine 352 carries the N6-acetyllysine; alternate modification. Residue lysine 352 is modified to N6-succinyllysine; alternate. Lysine 359 and lysine 389 each carry N6-acetyllysine. The residue at position 396 (lysine 396) is an N6-acetyllysine; alternate. Lysine 396 carries the N6-succinyllysine; alternate modification. Position 410 is a phosphoserine (serine 410). Glycine 440 is a binding site for ATP. An N6-acetyllysine modification is found at lysine 469. The residue at position 481 (lysine 481) is an N6-acetyllysine; alternate. The residue at position 481 (lysine 481) is an N6-succinyllysine; alternate. Serine 488 is modified (phosphoserine). Position 520 (aspartate 520) interacts with ATP. Residue lysine 551 forms a Glycyl lysine isopeptide (Lys-Gly) (interchain with G-Cter in SUMO2) linkage.

It belongs to the chaperonin (HSP60) family. Homoheptamer arranged in a ring structure. The functional units of these chaperonins consist of heptameric rings of the large subunit Hsp60, which function as a back-to-back double ring. Interacts with 2 heptameric Hsp10 rings to form the symmetrical football complex. Interacts with HRAS. Interacts with ATAD3A. Interacts with ETFBKMT and EEF1AKMT3. Interacts with MFHAS1. In terms of assembly, (Microbial infection) Interacts with hepatitis B virus/HBV protein X. As to quaternary structure, (Microbial infection) Interacts with HTLV-1 protein p40tax.

It is found in the mitochondrion matrix. The enzyme catalyses ATP + H2O + a folded polypeptide = ADP + phosphate + an unfolded polypeptide.. Its function is as follows. Chaperonin implicated in mitochondrial protein import and macromolecular assembly. Together with Hsp10, facilitates the correct folding of imported proteins. May also prevent misfolding and promote the refolding and proper assembly of unfolded polypeptides generated under stress conditions in the mitochondrial matrix. The functional units of these chaperonins consist of heptameric rings of the large subunit Hsp60, which function as a back-to-back double ring. In a cyclic reaction, Hsp60 ring complexes bind one unfolded substrate protein per ring, followed by the binding of ATP and association with 2 heptameric rings of the co-chaperonin Hsp10. This leads to sequestration of the substrate protein in the inner cavity of Hsp60 where, for a certain period of time, it can fold undisturbed by other cell components. Synchronous hydrolysis of ATP in all Hsp60 subunits results in the dissociation of the chaperonin rings and the release of ADP and the folded substrate protein. This is 60 kDa heat shock protein, mitochondrial (HSPD1) from Homo sapiens (Human).